The chain runs to 507 residues: ATP synthase subunit alpha, chloroplastic (507 aa).

170 to 177 (GDRQTGKT) contacts ATP.

It belongs to the ATPase alpha/beta chains family. As to quaternary structure, F-type ATPases have 2 components, CF(1) - the catalytic core - and CF(0) - the membrane proton channel. CF(1) has five subunits: alpha(3), beta(3), gamma(1), delta(1), epsilon(1). CF(0) has four main subunits: a, b, b' and c.

It localises to the plastid. The protein resides in the chloroplast thylakoid membrane. The catalysed reaction is ATP + H2O + 4 H(+)(in) = ADP + phosphate + 5 H(+)(out). In terms of biological role, produces ATP from ADP in the presence of a proton gradient across the membrane. The alpha chain is a regulatory subunit. The protein is ATP synthase subunit alpha, chloroplastic of Silene latifolia (White campion).